The primary structure comprises 134 residues: Holo-[acyl-carrier-protein] synthase (134 aa).

Mg(2+) contacts are provided by Asp8 and Glu57.

This sequence belongs to the P-Pant transferase superfamily. AcpS family. Mg(2+) is required as a cofactor.

It localises to the cytoplasm. It carries out the reaction apo-[ACP] + CoA = holo-[ACP] + adenosine 3',5'-bisphosphate + H(+). Its function is as follows. Transfers the 4'-phosphopantetheine moiety from coenzyme A to a Ser of acyl-carrier-protein. In Rhizobium rhizogenes (strain K84 / ATCC BAA-868) (Agrobacterium radiobacter), this protein is Holo-[acyl-carrier-protein] synthase.